The sequence spans 276 residues: Putative hydro-lyase Xaut_1503 (276 aa).

Belongs to the D-glutamate cyclase family.

The sequence is that of Putative hydro-lyase Xaut_1503 from Xanthobacter autotrophicus (strain ATCC BAA-1158 / Py2).